A 115-amino-acid polypeptide reads, in one-letter code: Large ribosomal subunit protein bL20c (115 aa).

Belongs to the bacterial ribosomal protein bL20 family.

The protein localises to the plastid. It is found in the chloroplast. Functionally, binds directly to 23S ribosomal RNA and is necessary for the in vitro assembly process of the 50S ribosomal subunit. It is not involved in the protein synthesizing functions of that subunit. This Chlorella vulgaris (Green alga) protein is Large ribosomal subunit protein bL20c (rpl20).